A 352-amino-acid polypeptide reads, in one-letter code: SKP1-like protein 20 (352 aa).

An interaction with the F-box domain of F-box proteins region spans residues 108–167 (TSAADSLQLKPLVDLTSRALARIIEGKNPEEIREIFHLPDDLTEEEKLEPLKNSMDDPRI). Disordered regions lie at residues 214–251 (KAVKMSKGKKKKKKKKDQKIVSSNNIHDKESHDLRSKQ) and 267–288 (LLSAEDDISTPNAGSEDEDIDD). Residues 216 to 230 (VKMSKGKKKKKKKKD) show a composition bias toward basic residues. A compositionally biased stretch (basic and acidic residues) spans 239 to 249 (IHDKESHDLRS).

The protein belongs to the SKP1 family. Part of a SCF (SKP1-cullin-F-box) protein ligase complex. Expressed in young seedlings, roots, leaves, floral stems, inflorescences, and siliques.

It localises to the nucleus. It participates in protein modification; protein ubiquitination. In terms of biological role, involved in ubiquitination and subsequent proteasomal degradation of target proteins. Together with CUL1, RBX1 and a F-box protein, it forms a SCF E3 ubiquitin ligase complex. The functional specificity of this complex depends on the type of F-box protein. In the SCF complex, it serves as an adapter that links the F-box protein to CUL1. The sequence is that of SKP1-like protein 20 (ASK20) from Arabidopsis thaliana (Mouse-ear cress).